Here is a 264-residue protein sequence, read N- to C-terminus: MAVGKNKRLTKGGKKGAKKKIVDPFSKKDWYDVKAPAMFNIRNLGKTLVTRTQGTKIASDGLKGRVFEVSLADLQNDEVAFRKFKLITEDVQGKNCLTNFHGMDLTRDKMCSMVKKWQTMIEAHVDVKTTDGYLLRLFCVGFTKKRNNQIRKTSYAQHQQVRQIRKKMMEIMTREVQTNDLKEVVNKLIPDSIGKDIEKACQSIYPLHDVYVRKVKMLKKPKFELGKLMELHGEGGGAGKPAGDETGAKVERADGYEPPVQESV.

Residues Gly-233–Val-264 are disordered. Over residues Ala-242–Gly-255 the composition is skewed to basic and acidic residues.

Belongs to the eukaryotic ribosomal protein eS1 family. Component of the small ribosomal subunit. Mature ribosomes consist of a small (40S) and a large (60S) subunit. The 40S subunit contains about 33 different proteins and 1 molecule of RNA (18S). The 60S subunit contains about 49 different proteins and 3 molecules of RNA (28S, 5.8S and 5S). Part of the small subunit (SSU) processome, composed of more than 70 proteins and the RNA chaperone small nucleolar RNA (snoRNA) U3.

Its subcellular location is the cytoplasm. It localises to the nucleus. It is found in the nucleolus. Component of the small ribosomal subunit. The ribosome is a large ribonucleoprotein complex responsible for the synthesis of proteins in the cell. Part of the small subunit (SSU) processome, first precursor of the small eukaryotic ribosomal subunit. During the assembly of the SSU processome in the nucleolus, many ribosome biogenesis factors, an RNA chaperone and ribosomal proteins associate with the nascent pre-rRNA and work in concert to generate RNA folding, modifications, rearrangements and cleavage as well as targeted degradation of pre-ribosomal RNA by the RNA exosome. May play a role during erythropoiesis. The chain is Small ribosomal subunit protein eS1 (rps3a) from Xenopus tropicalis (Western clawed frog).